Consider the following 109-residue polypeptide: MSAQPVDIQIFGRSLRVNCPPEQQDALNQAAEDLNQRLQDLKVRTRVTNTEQLVFIAALNVCHELAQERGKTRDYASNMEQRIRMLQQTIEQALLEQGRITERQGAQFE.

The stretch at 21-99 (PEQQDALNQA…IEQALLEQGR (79 aa)) forms a coiled coil.

The protein belongs to the ZapA family. Type 1 subfamily. In terms of assembly, homodimer. Interacts with FtsZ.

The protein localises to the cytoplasm. Its function is as follows. Activator of cell division through the inhibition of FtsZ GTPase activity, therefore promoting FtsZ assembly into bundles of protofilaments necessary for the formation of the division Z ring. It is recruited early at mid-cell but it is not essential for cell division. This Pectobacterium carotovorum subsp. carotovorum (strain PC1) protein is Cell division protein ZapA.